The sequence spans 428 residues: C4-dicarboxylate transport protein (428 aa).

8 consecutive transmembrane segments (helical) span residues S8–P28, L44–M64, V76–V96, I142–F162, V184–M204, L222–A242, I326–V346, and I352–I372.

The protein belongs to the dicarboxylate/amino acid:cation symporter (DAACS) (TC 2.A.23) family.

It is found in the cell inner membrane. Its function is as follows. Responsible for the transport of dicarboxylates such as succinate, fumarate, and malate from the periplasm across the membrane. The protein is C4-dicarboxylate transport protein of Escherichia coli O139:H28 (strain E24377A / ETEC).